We begin with the raw amino-acid sequence, 201 residues long: MTDPVTLDGQGSIGAFDEKRAEAAVRELLIAVGEDPDREGLRETPGRVARAYKEIFAGLYQEPEDVLTTTFDLGHDEMVLVKDIEVFSTCEHHLVPFRGVAHVGYIPATTGKITGLSKLARLVDVYARRPQVQERLTTQIAESLMSILEPRGVIVVVECEHMCMSMRGIRKPGAKTLTSAVRGQLRDPATRAEAMSLIMAR.

Positions 90, 93, and 163 each coordinate Zn(2+).

Belongs to the GTP cyclohydrolase I family. As to quaternary structure, homomer.

It carries out the reaction GTP + H2O = 7,8-dihydroneopterin 3'-triphosphate + formate + H(+). It functions in the pathway cofactor biosynthesis; 7,8-dihydroneopterin triphosphate biosynthesis; 7,8-dihydroneopterin triphosphate from GTP: step 1/1. The sequence is that of GTP cyclohydrolase 1 from Streptomyces griseus subsp. griseus (strain JCM 4626 / CBS 651.72 / NBRC 13350 / KCC S-0626 / ISP 5235).